We begin with the raw amino-acid sequence, 261 residues long: Cytochrome c oxidase subunit 3 (261 aa).

Over 1-15 the chain is Mitochondrial matrix; sequence MTHQSHAYHMVKPSP. Residues 16-34 form a helical membrane-spanning segment; sequence WPLTGALSALLMTSGLAMW. At 35–40 the chain is on the mitochondrial intermembrane side; sequence FHFYST. Residues 41-66 traverse the membrane as a helical segment; sequence TLLTLGLLTNTLTMYQWWRDVMREGT. Topologically, residues 67–72 are mitochondrial matrix; it reads YQGHHT. Residues 73–105 traverse the membrane as a helical segment; it reads PPVQKGLRYGMILFITSEVFFFAGFFWAFYHSS. Topologically, residues 106 to 128 are mitochondrial intermembrane; sequence LAPTPQLGGHWPPTGITPLNPLE. The helical transmembrane segment at 129-152 threads the bilayer; that stretch reads VPLLNTSVLLASGVSITWAHHSLM. Topologically, residues 153–155 are mitochondrial matrix; sequence ENN. The helical transmembrane segment at 156–183 threads the bilayer; that stretch reads RNQMIQALLITILLGLYFTLLQASEYFE. Residues 184–190 are Mitochondrial intermembrane-facing; the sequence is SPFTISD. A helical membrane pass occupies residues 191 to 223; sequence GIYGSTFFVATGFHGLHVIIGSTFLTICLIRQL. Topologically, residues 224–232 are mitochondrial matrix; it reads MFHFTSKHH. The chain crosses the membrane as a helical span at residues 233–256; it reads FGFQAAAWYWHFVDVVWLFLYVSI. The Mitochondrial intermembrane portion of the chain corresponds to 257–261; the sequence is YWWGS.

This sequence belongs to the cytochrome c oxidase subunit 3 family. As to quaternary structure, component of the cytochrome c oxidase (complex IV, CIV), a multisubunit enzyme composed of 14 subunits. The complex is composed of a catalytic core of 3 subunits MT-CO1, MT-CO2 and MT-CO3, encoded in the mitochondrial DNA, and 11 supernumerary subunits COX4I, COX5A, COX5B, COX6A, COX6B, COX6C, COX7A, COX7B, COX7C, COX8 and NDUFA4, which are encoded in the nuclear genome. The complex exists as a monomer or a dimer and forms supercomplexes (SCs) in the inner mitochondrial membrane with NADH-ubiquinone oxidoreductase (complex I, CI) and ubiquinol-cytochrome c oxidoreductase (cytochrome b-c1 complex, complex III, CIII), resulting in different assemblies (supercomplex SCI(1)III(2)IV(1) and megacomplex MCI(2)III(2)IV(2)).

Its subcellular location is the mitochondrion inner membrane. It catalyses the reaction 4 Fe(II)-[cytochrome c] + O2 + 8 H(+)(in) = 4 Fe(III)-[cytochrome c] + 2 H2O + 4 H(+)(out). Its function is as follows. Component of the cytochrome c oxidase, the last enzyme in the mitochondrial electron transport chain which drives oxidative phosphorylation. The respiratory chain contains 3 multisubunit complexes succinate dehydrogenase (complex II, CII), ubiquinol-cytochrome c oxidoreductase (cytochrome b-c1 complex, complex III, CIII) and cytochrome c oxidase (complex IV, CIV), that cooperate to transfer electrons derived from NADH and succinate to molecular oxygen, creating an electrochemical gradient over the inner membrane that drives transmembrane transport and the ATP synthase. Cytochrome c oxidase is the component of the respiratory chain that catalyzes the reduction of oxygen to water. Electrons originating from reduced cytochrome c in the intermembrane space (IMS) are transferred via the dinuclear copper A center (CU(A)) of subunit 2 and heme A of subunit 1 to the active site in subunit 1, a binuclear center (BNC) formed by heme A3 and copper B (CU(B)). The BNC reduces molecular oxygen to 2 water molecules using 4 electrons from cytochrome c in the IMS and 4 protons from the mitochondrial matrix. This chain is Cytochrome c oxidase subunit 3 (MT-CO3), found in Pan troglodytes (Chimpanzee).